We begin with the raw amino-acid sequence, 396 residues long: S-adenosylmethionine synthase (396 aa).

His-16 lines the ATP pocket. Asp-18 provides a ligand contact to Mg(2+). Glu-44 lines the K(+) pocket. 2 residues coordinate L-methionine: Glu-57 and Gln-100. The tract at residues 100 to 110 is flexible loop; the sequence is QSQDIARGVDN. ATP contacts are provided by residues 162–164, Asp-237, 243–244, Ala-260, and Lys-264; these read DGK and RK. Asp-237 provides a ligand contact to L-methionine. Lys-268 contacts L-methionine.

The protein belongs to the AdoMet synthase family. Homotetramer; dimer of dimers. Requires Mg(2+) as cofactor. K(+) is required as a cofactor.

It is found in the cytoplasm. It carries out the reaction L-methionine + ATP + H2O = S-adenosyl-L-methionine + phosphate + diphosphate. It functions in the pathway amino-acid biosynthesis; S-adenosyl-L-methionine biosynthesis; S-adenosyl-L-methionine from L-methionine: step 1/1. Its function is as follows. Catalyzes the formation of S-adenosylmethionine (AdoMet) from methionine and ATP. The overall synthetic reaction is composed of two sequential steps, AdoMet formation and the subsequent tripolyphosphate hydrolysis which occurs prior to release of AdoMet from the enzyme. The chain is S-adenosylmethionine synthase from Myxococcus xanthus.